The sequence spans 167 residues: 18.8 kDa class II heat shock protein (167 aa).

Residues 49-167 (DAKAMAATPA…KPKTVEVKVA (119 aa)) enclose the sHSP domain.

The protein belongs to the small heat shock protein (HSP20) family.

Its subcellular location is the cytoplasm. The sequence is that of 18.8 kDa class II heat shock protein (SHSP-2) from Ipomoea nil (Japanese morning glory).